Consider the following 380-residue polypeptide: PqqA peptide cyclase (380 aa).

A Radical SAM core domain is found at 12–228 (FGIPLAVLLE…EEARERLKGR (217 aa)). Cysteine 26, cysteine 30, and cysteine 33 together coordinate [4Fe-4S] cluster.

It belongs to the radical SAM superfamily. PqqE family. Interacts with PqqD. The interaction is necessary for activity of PqqE. [4Fe-4S] cluster serves as cofactor.

The catalysed reaction is [PQQ precursor protein] + S-adenosyl-L-methionine = E-Y cross-linked-[PQQ precursor protein] + 5'-deoxyadenosine + L-methionine + H(+). It participates in cofactor biosynthesis; pyrroloquinoline quinone biosynthesis. Its function is as follows. Catalyzes the cross-linking of a glutamate residue and a tyrosine residue in the PqqA protein as part of the biosynthesis of pyrroloquinoline quinone (PQQ). The chain is PqqA peptide cyclase from Bradyrhizobium diazoefficiens (strain JCM 10833 / BCRC 13528 / IAM 13628 / NBRC 14792 / USDA 110).